The following is a 572-amino-acid chain: Proline--tRNA ligase (572 aa).

It belongs to the class-II aminoacyl-tRNA synthetase family. ProS type 1 subfamily. Homodimer.

The protein resides in the cytoplasm. The enzyme catalyses tRNA(Pro) + L-proline + ATP = L-prolyl-tRNA(Pro) + AMP + diphosphate. Functionally, catalyzes the attachment of proline to tRNA(Pro) in a two-step reaction: proline is first activated by ATP to form Pro-AMP and then transferred to the acceptor end of tRNA(Pro). As ProRS can inadvertently accommodate and process non-cognate amino acids such as alanine and cysteine, to avoid such errors it has two additional distinct editing activities against alanine. One activity is designated as 'pretransfer' editing and involves the tRNA(Pro)-independent hydrolysis of activated Ala-AMP. The other activity is designated 'posttransfer' editing and involves deacylation of mischarged Ala-tRNA(Pro). The misacylated Cys-tRNA(Pro) is not edited by ProRS. The sequence is that of Proline--tRNA ligase from Edwardsiella ictaluri (strain 93-146).